A 343-amino-acid chain; its full sequence is Phosphate acyltransferase (343 aa).

Belongs to the PlsX family. In terms of assembly, homodimer. Probably interacts with PlsY.

It localises to the cytoplasm. It carries out the reaction a fatty acyl-[ACP] + phosphate = an acyl phosphate + holo-[ACP]. It participates in lipid metabolism; phospholipid metabolism. Its function is as follows. Catalyzes the reversible formation of acyl-phosphate (acyl-PO(4)) from acyl-[acyl-carrier-protein] (acyl-ACP). This enzyme utilizes acyl-ACP as fatty acyl donor, but not acyl-CoA. The chain is Phosphate acyltransferase from Limosilactobacillus reuteri (strain DSM 20016) (Lactobacillus reuteri).